The primary structure comprises 434 residues: ATP-dependent protease ATPase subunit HslU (434 aa).

ATP is bound by residues isoleucine 18, 60–65, aspartate 247, glutamate 312, and arginine 384; that span reads GVGKTE.

This sequence belongs to the ClpX chaperone family. HslU subfamily. As to quaternary structure, a double ring-shaped homohexamer of HslV is capped on each side by a ring-shaped HslU homohexamer. The assembly of the HslU/HslV complex is dependent on binding of ATP.

It localises to the cytoplasm. ATPase subunit of a proteasome-like degradation complex; this subunit has chaperone activity. The binding of ATP and its subsequent hydrolysis by HslU are essential for unfolding of protein substrates subsequently hydrolyzed by HslV. HslU recognizes the N-terminal part of its protein substrates and unfolds these before they are guided to HslV for hydrolysis. The polypeptide is ATP-dependent protease ATPase subunit HslU (Brucella suis (strain ATCC 23445 / NCTC 10510)).